Here is a 436-residue protein sequence, read N- to C-terminus: Bifunctional protein GlmU (436 aa).

Residues 1-225 (MNNNTSIIIL…EQNFMGINDK (225 aa)) form a pyrophosphorylase region. Residues 10–13 (LAAG), lysine 24, glutamine 76, and 83–84 (GT) contribute to the UDP-N-acetyl-alpha-D-glucosamine site. Aspartate 104 lines the Mg(2+) pocket. The UDP-N-acetyl-alpha-D-glucosamine site is built by glycine 137, glutamate 151, asparagine 166, and asparagine 223. Asparagine 223 contributes to the Mg(2+) binding site. The segment at 226-246 (FQLSIAEKIMQDEIKQNLMKA) is linker. The tract at residues 247–436 (GVLMRMPESI…KFFGKDDVKK (190 aa)) is N-acetyltransferase. UDP-N-acetyl-alpha-D-glucosamine is bound by residues arginine 310 and lysine 327. Histidine 338 serves as the catalytic Proton acceptor. UDP-N-acetyl-alpha-D-glucosamine is bound by residues tyrosine 341 and asparagine 352. Acetyl-CoA contacts are provided by residues 361-362 (NY), serine 380, alanine 398, and arginine 415.

In the N-terminal section; belongs to the N-acetylglucosamine-1-phosphate uridyltransferase family. It in the C-terminal section; belongs to the transferase hexapeptide repeat family. Homotrimer. Mg(2+) is required as a cofactor.

The protein resides in the cytoplasm. It carries out the reaction alpha-D-glucosamine 1-phosphate + acetyl-CoA = N-acetyl-alpha-D-glucosamine 1-phosphate + CoA + H(+). It catalyses the reaction N-acetyl-alpha-D-glucosamine 1-phosphate + UTP + H(+) = UDP-N-acetyl-alpha-D-glucosamine + diphosphate. Its pathway is nucleotide-sugar biosynthesis; UDP-N-acetyl-alpha-D-glucosamine biosynthesis; N-acetyl-alpha-D-glucosamine 1-phosphate from alpha-D-glucosamine 6-phosphate (route II): step 2/2. The protein operates within nucleotide-sugar biosynthesis; UDP-N-acetyl-alpha-D-glucosamine biosynthesis; UDP-N-acetyl-alpha-D-glucosamine from N-acetyl-alpha-D-glucosamine 1-phosphate: step 1/1. It functions in the pathway bacterial outer membrane biogenesis; LPS lipid A biosynthesis. Catalyzes the last two sequential reactions in the de novo biosynthetic pathway for UDP-N-acetylglucosamine (UDP-GlcNAc). The C-terminal domain catalyzes the transfer of acetyl group from acetyl coenzyme A to glucosamine-1-phosphate (GlcN-1-P) to produce N-acetylglucosamine-1-phosphate (GlcNAc-1-P), which is converted into UDP-GlcNAc by the transfer of uridine 5-monophosphate (from uridine 5-triphosphate), a reaction catalyzed by the N-terminal domain. The sequence is that of Bifunctional protein GlmU from Campylobacter concisus (strain 13826).